The primary structure comprises 344 residues: Phosphate acyltransferase (344 aa).

It belongs to the PlsX family. As to quaternary structure, homodimer. Probably interacts with PlsY.

The protein resides in the cytoplasm. The enzyme catalyses a fatty acyl-[ACP] + phosphate = an acyl phosphate + holo-[ACP]. The protein operates within lipid metabolism; phospholipid metabolism. Catalyzes the reversible formation of acyl-phosphate (acyl-PO(4)) from acyl-[acyl-carrier-protein] (acyl-ACP). This enzyme utilizes acyl-ACP as fatty acyl donor, but not acyl-CoA. This Actinobacillus pleuropneumoniae serotype 5b (strain L20) protein is Phosphate acyltransferase.